Here is a 210-residue protein sequence, read N- to C-terminus: Somatotropin (210 aa).

The N-terminal stretch at 1 to 23 (MARVLVLLSVVLVSLLVNQGRAS) is a signal peptide. Residue His-38 coordinates Zn(2+). Cys-71 and Cys-183 are oxidised to a cystine. Position 192 (Glu-192) interacts with Zn(2+). Cys-200 and Cys-208 are disulfide-bonded.

It belongs to the somatotropin/prolactin family.

It is found in the secreted. In terms of biological role, growth hormone plays an important role in growth control. The sequence is that of Somatotropin (gh) from Cyprinus carpio (Common carp).